The chain runs to 104 residues: Large ribosomal subunit protein bL21c (104 aa).

This sequence belongs to the bacterial ribosomal protein bL21 family. As to quaternary structure, part of the 50S ribosomal subunit.

Its subcellular location is the plastid. It is found in the chloroplast. Functionally, this protein binds to 23S rRNA. In Porphyra purpurea (Red seaweed), this protein is Large ribosomal subunit protein bL21c.